The sequence spans 339 residues: Glyceraldehyde-3-phosphate dehydrogenase (339 aa).

NAD(+) contacts are provided by residues 13–14 (RI), aspartate 35, and lysine 84. D-glyceraldehyde 3-phosphate is bound by residues 156–158 (SCT), threonine 187, 216–217 (TG), and arginine 239. Cysteine 157 (nucleophile) is an active-site residue. Asparagine 321 contacts NAD(+).

It belongs to the glyceraldehyde-3-phosphate dehydrogenase family. As to quaternary structure, homotetramer.

The protein resides in the cytoplasm. The catalysed reaction is D-glyceraldehyde 3-phosphate + phosphate + NAD(+) = (2R)-3-phospho-glyceroyl phosphate + NADH + H(+). It participates in carbohydrate degradation; glycolysis; pyruvate from D-glyceraldehyde 3-phosphate: step 1/5. This Onchocerca volvulus protein is Glyceraldehyde-3-phosphate dehydrogenase.